Consider the following 380-residue polypeptide: O-antigen polymerase (380 aa).

12 helical membrane passes run 1-21 (MTYF…RLTP), 27-47 (NIVL…TFNE), 55-75 (ATTL…YILI), 94-114 (YIYW…IILL), 132-152 (SISG…MYLA), 169-189 (FLLA…VYIV), 201-221 (LIYG…LGKF), 229-249 (IISA…AAFN), 282-302 (ILPW…FAPW), 306-326 (LGLY…GIWF), 332-352 (LAVG…FFQE), and 353-373 (HYLL…LLAM).

The protein resides in the cell inner membrane. It carries out the reaction n lipid-linked O-antigen repeat units = a lipid-linked O antigen + (n-1) polyisoprenyl diphosphate.. The protein operates within bacterial outer membrane biogenesis; LPS O-antigen biosynthesis. Polymerase involved in the biosynthesis of the lipopolysaccharide (LPS). Catalyzes the polymerization of the O-antigen repeat units on the periplasmic face of the inner membrane, leading to the formation of the lipid-linked O-antigen molecule. The chain is O-antigen polymerase from Shigella dysenteriae.